The sequence spans 511 residues: Protein phosphatase 2C 16 (511 aa).

A signal peptide spans 1–22; the sequence is MEEMTPAVAMTLSLAANTMCES. Residues 189 to 501 enclose the PPM-type phosphatase domain; sequence LWGTVSIQGN…DNISIIVIDL (313 aa). Aspartate 243, glycine 244, aspartate 432, and aspartate 492 together coordinate Mn(2+).

This sequence belongs to the PP2C family. Interacts with SWI3B (via N-terminus). Interacts with ABA-bounded PYR1, PYL1, PYL2, PYL3, PYL4, PYL5, PYL6, PYL8 and PYL9, and with free PYL2, PYL3, PYL4, PYL10 and PYL13. Requires Mg(2+) as cofactor. Mn(2+) serves as cofactor. Expressed in seeds, roots, stems, leaves and flowers, especially in meristematic tissues, guard cells, embryo and siliques.

Its subcellular location is the cytoplasm. It localises to the nucleus. The enzyme catalyses O-phospho-L-seryl-[protein] + H2O = L-seryl-[protein] + phosphate. It catalyses the reaction O-phospho-L-threonyl-[protein] + H2O = L-threonyl-[protein] + phosphate. With respect to regulation, repressed by PYR/PYL/RCAR ABA receptors in an ABA-dependent manner. Key component and repressor of the abscisic acid (ABA) signaling pathway that regulates numerous ABA responses, such as stomatal closure, seed germination and inhibition of vegetative growth. Confers enhanced sensitivity to drought. The protein is Protein phosphatase 2C 16 (HAB1) of Arabidopsis thaliana (Mouse-ear cress).